A 209-amino-acid polypeptide reads, in one-letter code: Ribosomal RNA small subunit methyltransferase G (209 aa).

Residues G77, M82, 128–129 (VE), and R143 contribute to the S-adenosyl-L-methionine site.

It belongs to the methyltransferase superfamily. RNA methyltransferase RsmG family.

The protein localises to the cytoplasm. The catalysed reaction is guanosine(527) in 16S rRNA + S-adenosyl-L-methionine = N(7)-methylguanosine(527) in 16S rRNA + S-adenosyl-L-homocysteine. Its function is as follows. Specifically methylates the N7 position of guanine in position 527 of 16S rRNA. The protein is Ribosomal RNA small subunit methyltransferase G of Chromobacterium violaceum (strain ATCC 12472 / DSM 30191 / JCM 1249 / CCUG 213 / NBRC 12614 / NCIMB 9131 / NCTC 9757 / MK).